Here is a 199-residue protein sequence, read N- to C-terminus: NAD(P)H dehydrogenase (quinone) (199 aa).

Residues 4–190 (VLVLYYSAYG…AGARYQGQVI (187 aa)) enclose the Flavodoxin-like domain. FMN contacts are provided by residues 10–15 (SAYGHI) and 78–80 (TRF). Residue Tyr-12 coordinates NAD(+). A substrate-binding site is contributed by Trp-98. Residues 113–119 (STATQHG) and His-134 each bind FMN.

It belongs to the WrbA family. It depends on FMN as a cofactor.

The enzyme catalyses a quinone + NADH + H(+) = a quinol + NAD(+). It carries out the reaction a quinone + NADPH + H(+) = a quinol + NADP(+). This is NAD(P)H dehydrogenase (quinone) from Rhodopseudomonas palustris (strain BisA53).